We begin with the raw amino-acid sequence, 298 residues long: MKTLQSTLLLLLLVPLIKPAPPTQQDSRIIYDYGTDNFEESIFSQDYEDKYLDGKNIKEKETVIIPNEKSLQLQKDEAITPLPPKKENDEMPTCLLCVCLSGSVYCEEVDIDAVPPLPKESAYLYARFNKIKKLTAKDFADIPNLRRLDFTGNLIEDIEDGTFSKLSLLEELSLAENQLLKLPVLPPKLTLFNAKYNKIKSRGIKANAFKKLNNLTFLYLDHNALESVPLNLPESLRVIHLQFNNIASITDDTFCKANDTSYIRDRIEEIRLEGNPIVLGKHPNSFICLKRLPIGSYF.

A signal peptide spans 1–20; sequence MKTLQSTLLLLLLVPLIKPA. An O-linked (GalNAc...) threonine glycan is attached at T80. An N-linked (GlcNAc...) (keratan sulfate) asparagine glycan is attached at N88. LRR repeat units follow at residues 112 to 131, 132 to 155, 156 to 179, 180 to 199, 200 to 225, 226 to 246, and 247 to 277; these read DAVPPLPKESAYLYARFNKI, KKLTAKDFADIPNLRRLDFTGNLI, EDIEDGTFSKLSLLEELSLAENQL, LKLPVLPPKLTLFNAKYNKI, KSRGIKANAFKKLNNLTFLYLDHNAL, ESVPLNLPESLRVIHLQFNNI, and ASITDDTFCKANDTSYIRDRIEEIRLEGNPI. N214 carries N-linked (GlcNAc...) (keratan sulfate) asparagine glycosylation. A disulfide bond links C255 and C288. An N-linked (GlcNAc...) (keratan sulfate) asparagine glycan is attached at N258.

Belongs to the small leucine-rich proteoglycan (SLRP) family. SLRP class III subfamily. Post-translationally, O-glycosylated with a core 1 or possibly core 8 glycan. Contains keratan sulfate. As to expression, bone.

It is found in the secreted. The protein resides in the extracellular space. The protein localises to the extracellular matrix. Functionally, induces bone formation in conjunction with TGF-beta-1 or TGF-beta-2. This chain is Mimecan (OGN), found in Homo sapiens (Human).